A 578-amino-acid polypeptide reads, in one-letter code: Oxygen sensor histidine kinase response regulator DevS/DosS (578 aa).

2 consecutive GAF domains span residues 63 to 200 (DLEA…GIAV) and 231 to 369 (EPAT…ALAW). His-149 is a binding site for heme. The Histidine kinase domain maps to 383–578 (VLTDRDRIAR…VLRWSAPLSQ (196 aa)). His-395 carries the phosphohistidine; by autocatalysis modification.

Mg(2+) serves as cofactor. Requires heme as cofactor.

It is found in the cytoplasm. It carries out the reaction ATP + protein L-histidine = ADP + protein N-phospho-L-histidine.. In terms of biological role, member of the two-component regulatory system DevR/DevS (DosR/DosS) involved in onset of the dormancy response. Regulates an approximately 48-member regulon. Required for full induction of the DevR (DosR) regulon; acts later than DosT to positively regulate expression of the DevR regulon during adaptation to anaerobiosis. Characterized as an oxygen sensor; O(2) acts as a switch, with O(2)-bound Fe(2+) protein inactive in autophosphorylation. Has also been suggested to act as a redox sensor, or perhaps as a dual oxygen/redox sensor. Donates a phosphate group to transcriptional regulator DevR (DosR). The chain is Oxygen sensor histidine kinase response regulator DevS/DosS (devS) from Mycobacterium tuberculosis (strain CDC 1551 / Oshkosh).